We begin with the raw amino-acid sequence, 123 residues long: Small ribosomal subunit protein uS12 (123 aa).

Aspartate 89 carries the 3-methylthioaspartic acid modification. The disordered stretch occupies residues 101–123 (SLDTSGVKDRKQGRSKYGAKRPK). The span at 113 to 123 (GRSKYGAKRPK) shows a compositional bias: basic residues.

Belongs to the universal ribosomal protein uS12 family. Part of the 30S ribosomal subunit. Contacts proteins S8 and S17. May interact with IF1 in the 30S initiation complex.

With S4 and S5 plays an important role in translational accuracy. In terms of biological role, interacts with and stabilizes bases of the 16S rRNA that are involved in tRNA selection in the A site and with the mRNA backbone. Located at the interface of the 30S and 50S subunits, it traverses the body of the 30S subunit contacting proteins on the other side and probably holding the rRNA structure together. The combined cluster of proteins S8, S12 and S17 appears to hold together the shoulder and platform of the 30S subunit. The sequence is that of Small ribosomal subunit protein uS12 from Azotobacter vinelandii (strain DJ / ATCC BAA-1303).